Reading from the N-terminus, the 572-residue chain is Transmembrane glycoprotein NMB (572 aa).

The N-terminal stretch at 1 to 22 is a signal peptide; sequence MESLCGVLVFLLLAAGLPLQAA. Topologically, residues 23-500 are extracellular; it reads KRFRDVLGHE…DLGSPLRTVN (478 aa). Residues Asn-93, Asn-134, Asn-200, Asn-249, Asn-275, Asn-296, Asn-300, Asn-306, and Asn-312 are each glycosylated (N-linked (GlcNAc...) asparagine). Residues 251 to 338 form the PKD domain; that stretch reads SDETFLRDLP…SPSSSTSPSP (88 aa). The tract at residues 321 to 359 is disordered; the sequence is GPCPSPTPSPSSSTSPSPASSPSPTLSTPSPSLMPTGHK. A compositionally biased stretch (low complexity) spans 330-356; the sequence is PSSSTSPSPASSPSPTLSTPSPSLMPT. N-linked (GlcNAc...) asparagine glycosylation is found at Asn-461 and Asn-469. Residues 501-521 traverse the membrane as a helical segment; the sequence is GVLISIGCLAMFVTMVTILLY. Over 522–572 the chain is Cytoplasmic; sequence KKHKTYKPIGNCTRNVVKGKGLSVFLSHAKAPFSRGDREKDPLLQDKPWML. Ser-544 is modified (phosphoserine). Residues 556–558 carry the Cell attachment site motif; that stretch reads RGD.

This sequence belongs to the PMEL/NMB family.

Its subcellular location is the cell membrane. It is found in the melanosome membrane. The protein localises to the early endosome membrane. Functionally, could be a melanogenic enzyme. The protein is Transmembrane glycoprotein NMB (Gpnmb) of Rattus norvegicus (Rat).